The primary structure comprises 118 residues: UPF0344 protein BLi01172/BL01343 (118 aa).

A run of 4 helical transmembrane segments spans residues Ile-6 to Gly-26, Ile-33 to Phe-53, Glu-62 to Ile-82, and Ala-89 to Leu-109.

This sequence belongs to the UPF0344 family.

It localises to the cell membrane. The chain is UPF0344 protein BLi01172/BL01343 from Bacillus licheniformis (strain ATCC 14580 / DSM 13 / JCM 2505 / CCUG 7422 / NBRC 12200 / NCIMB 9375 / NCTC 10341 / NRRL NRS-1264 / Gibson 46).